A 201-amino-acid polypeptide reads, in one-letter code: Protein GrpE (201 aa).

It belongs to the GrpE family. In terms of assembly, homodimer.

The protein localises to the cytoplasm. Its function is as follows. Participates actively in the response to hyperosmotic and heat shock by preventing the aggregation of stress-denatured proteins, in association with DnaK and GrpE. It is the nucleotide exchange factor for DnaK and may function as a thermosensor. Unfolded proteins bind initially to DnaJ; upon interaction with the DnaJ-bound protein, DnaK hydrolyzes its bound ATP, resulting in the formation of a stable complex. GrpE releases ADP from DnaK; ATP binding to DnaK triggers the release of the substrate protein, thus completing the reaction cycle. Several rounds of ATP-dependent interactions between DnaJ, DnaK and GrpE are required for fully efficient folding. The chain is Protein GrpE from Shewanella frigidimarina (strain NCIMB 400).